Reading from the N-terminus, the 235-residue chain is Nitrile hydratase subunit beta (235 aa).

The protein belongs to the nitrile hydratase subunit beta family. As to quaternary structure, heterodimer of an alpha and a beta chain.

The catalysed reaction is an aliphatic primary amide = an aliphatic nitrile + H2O. NHase catalyzes the hydration of various nitrile compounds to the corresponding amides. In Rhodococcus sp, this protein is Nitrile hydratase subunit beta (nthB).